The primary structure comprises 425 residues: Type II secretion system protein L (425 aa).

At 1–273 (MKIAGKWKRK…DKAWQNTLLP (273 aa)) the chain is on the cytoplasmic side. Residues 274 to 290 (WRGVGIAFACYLLLVVA) form a helical membrane-spanning segment. Topologically, residues 291–425 (DAGWAHYQLY…EGRLTLRSQQ (135 aa)) are periplasmic.

Belongs to the GSP L family. In terms of assembly, type II secretion system is composed of four main components: the outer membrane complex, the inner membrane complex, the cytoplasmic secretion ATPase and the periplasm-spanning pseudopilus. Forms homodimers. Interacts with OutM/GspM. Interacts with OutE/GspE and OutF/GspF.

It localises to the cell inner membrane. In terms of biological role, inner membrane component of the type II secretion system required for the energy-dependent secretion of extracellular factors such as proteases and toxins from the periplasm. Plays a role in the complex assembly and recruits OutM resulting in a stable complex in the inner membrane. Provides thus a link between the energy-providing OutE protein in the cytoplasm and the rest of the T2SS machinery. This Pectobacterium carotovorum subsp. carotovorum (Erwinia carotovora subsp. carotovora) protein is Type II secretion system protein L (outL).